The primary structure comprises 363 residues: NAD(P)H-quinone oxidoreductase subunit 1, chloroplastic (363 aa).

The next 6 helical transmembrane spans lie at 27-47 (VWLL…VLVI), 104-124 (IAVI…HLVL), 127-147 (LSIG…GLLM), 248-268 (YSGI…LVSS), 300-320 (VFGM…FLFI), and 343-363 (FLLP…LFSL).

Belongs to the complex I subunit 1 family. NDH is composed of at least 16 different subunits, 5 of which are encoded in the nucleus.

Its subcellular location is the plastid. The protein resides in the chloroplast thylakoid membrane. The catalysed reaction is a plastoquinone + NADH + (n+1) H(+)(in) = a plastoquinol + NAD(+) + n H(+)(out). The enzyme catalyses a plastoquinone + NADPH + (n+1) H(+)(in) = a plastoquinol + NADP(+) + n H(+)(out). In terms of biological role, NDH shuttles electrons from NAD(P)H:plastoquinone, via FMN and iron-sulfur (Fe-S) centers, to quinones in the photosynthetic chain and possibly in a chloroplast respiratory chain. The immediate electron acceptor for the enzyme in this species is believed to be plastoquinone. Couples the redox reaction to proton translocation, and thus conserves the redox energy in a proton gradient. The polypeptide is NAD(P)H-quinone oxidoreductase subunit 1, chloroplastic (Ranunculus macranthus (Large buttercup)).